The chain runs to 134 residues: MNTLRLNIVTPNGSVYEREDVEMAVLQTTAGEMGIMYGHIPTVAALKTGHVKVNFHNGNEFIAVSDGFIEARQHQLSIIVQTAEPASEIDVERAKLAKSRAESHLEDDDDNTDINRAKRALERANNRLRVAELQ.

Positions 94–104 are enriched in basic and acidic residues; it reads AKLAKSRAESH. Residues 94 to 115 are disordered; sequence AKLAKSRAESHLEDDDDNTDIN.

The protein belongs to the ATPase epsilon chain family. As to quaternary structure, F-type ATPases have 2 components, CF(1) - the catalytic core - and CF(0) - the membrane proton channel. CF(1) has five subunits: alpha(3), beta(3), gamma(1), delta(1), epsilon(1). CF(0) has three main subunits: a, b and c.

It is found in the cell membrane. Produces ATP from ADP in the presence of a proton gradient across the membrane. This Staphylococcus epidermidis (strain ATCC 12228 / FDA PCI 1200) protein is ATP synthase epsilon chain.